We begin with the raw amino-acid sequence, 410 residues long: Protein TIC 214 (410 aa).

Transmembrane regions (helical) follow at residues 22–42 (FVFG…GSFI), 61–81 (GSAI…IGVI), 87–107 (LEPS…IGFL), 131–151 (AVIV…ITSI), 161–181 (LFLF…GFLI), and 210–230 (LALC…YIGL).

Belongs to the TIC214 family. Part of the Tic complex.

It is found in the plastid. The protein resides in the chloroplast inner membrane. Its function is as follows. Involved in protein precursor import into chloroplasts. May be part of an intermediate translocation complex acting as a protein-conducting channel at the inner envelope. The chain is Protein TIC 214 from Mesostigma viride (Green alga).